The primary structure comprises 233 residues: ATP-dependent Clp protease proteolytic subunit 1 (233 aa).

S116 functions as the Nucleophile in the catalytic mechanism. Residue H141 is part of the active site.

Belongs to the peptidase S14 family. As to quaternary structure, fourteen ClpP subunits assemble into 2 heptameric rings which stack back to back to give a disk-like structure with a central cavity, resembling the structure of eukaryotic proteasomes.

It is found in the cytoplasm. The enzyme catalyses Hydrolysis of proteins to small peptides in the presence of ATP and magnesium. alpha-casein is the usual test substrate. In the absence of ATP, only oligopeptides shorter than five residues are hydrolyzed (such as succinyl-Leu-Tyr-|-NHMec, and Leu-Tyr-Leu-|-Tyr-Trp, in which cleavage of the -Tyr-|-Leu- and -Tyr-|-Trp bonds also occurs).. In terms of biological role, cleaves peptides in various proteins in a process that requires ATP hydrolysis. Has a chymotrypsin-like activity. Plays a major role in the degradation of misfolded proteins. This chain is ATP-dependent Clp protease proteolytic subunit 1, found in Salinibacter ruber (strain DSM 13855 / M31).